Here is a 371-residue protein sequence, read N- to C-terminus: Cytochrome b (371 aa).

The next 4 helical transmembrane spans lie at 25 to 45 (FGSM…FLAV), 69 to 90 (WMMQ…YIHI), 105 to 125 (WMSG…GYVL), and 170 to 190 (FFAL…LHII). Heme b-binding residues include His75 and His89. Heme b-binding residues include His174 and His188. His193 contacts a ubiquinone. The next 4 membrane-spanning stretches (helical) occupy residues 218 to 238 (HKDL…VSFF), 280 to 300 (LGGA…PFTH), 312 to 332 (LSQL…WAAT), and 339 to 358 (FIAI…LSIP).

It belongs to the cytochrome b family. The cytochrome bc1 complex contains 3 respiratory subunits (MT-CYB, CYC1 and UQCRFS1), 2 core proteins (UQCRC1 and UQCRC2) and probably 6 low-molecular weight proteins. Heme b is required as a cofactor.

The protein localises to the mitochondrion inner membrane. Component of the ubiquinol-cytochrome c reductase complex (complex III or cytochrome b-c1 complex) that is part of the mitochondrial respiratory chain. The b-c1 complex mediates electron transfer from ubiquinol to cytochrome c. Contributes to the generation of a proton gradient across the mitochondrial membrane that is then used for ATP synthesis. The chain is Cytochrome b (MT-CYB) from Liasis olivaceus (Olive python).